Here is a 1409-residue protein sequence, read N- to C-terminus: DNA-directed RNA polymerase subunit beta' (1409 aa).

Positions 69, 71, 84, and 87 each coordinate Zn(2+). Mg(2+)-binding residues include Asp-461, Asp-463, and Asp-465. Cys-805, Cys-879, Cys-886, and Cys-889 together coordinate Zn(2+).

This sequence belongs to the RNA polymerase beta' chain family. The RNAP catalytic core consists of 2 alpha, 1 beta, 1 beta' and 1 omega subunit. When a sigma factor is associated with the core the holoenzyme is formed, which can initiate transcription. Mg(2+) is required as a cofactor. Zn(2+) serves as cofactor.

The enzyme catalyses RNA(n) + a ribonucleoside 5'-triphosphate = RNA(n+1) + diphosphate. Its function is as follows. DNA-dependent RNA polymerase catalyzes the transcription of DNA into RNA using the four ribonucleoside triphosphates as substrates. The protein is DNA-directed RNA polymerase subunit beta' of Anaplasma phagocytophilum (strain HZ).